A 353-amino-acid chain; its full sequence is uncharacterized protein (353 aa).

Mn(2+) is bound by residues Asp-212, Asp-223, His-287, Glu-316, and Glu-330.

Belongs to the peptidase M24B family. The cofactor is Mn(2+).

This is an uncharacterized protein from Bacillus subtilis (strain 168).